A 218-amino-acid chain; its full sequence is Histone chaperone ASF1B (218 aa).

This sequence belongs to the ASF1 family. Interacts with histone H3 and histone H4. Interacts strongly with the N-terminus of TOUSLED. In terms of processing, phosphorylated in vitro by TOUSLED.

It localises to the nucleus. Histone chaperone that facilitates histone deposition and histone exchange and removal during nucleosome assembly and disassembly. The polypeptide is Histone chaperone ASF1B (ASF1B) (Arabidopsis thaliana (Mouse-ear cress)).